Here is a 102-residue protein sequence, read N- to C-terminus: Small ribosomal subunit protein uS10 (102 aa).

The protein belongs to the universal ribosomal protein uS10 family. In terms of assembly, part of the 30S ribosomal subunit.

In terms of biological role, involved in the binding of tRNA to the ribosomes. The sequence is that of Small ribosomal subunit protein uS10 from Methanosphaera stadtmanae (strain ATCC 43021 / DSM 3091 / JCM 11832 / MCB-3).